The following is a 216-amino-acid chain: Small ribosomal subunit protein uS3 (216 aa).

The 69-residue stretch at 38-106 folds into the KH type-2 domain; the sequence is IRGYLKKKLY…EIIINILEVR (69 aa).

This sequence belongs to the universal ribosomal protein uS3 family. Part of the 30S ribosomal subunit. Forms a tight complex with proteins S10 and S14.

Functionally, binds the lower part of the 30S subunit head. Binds mRNA in the 70S ribosome, positioning it for translation. The protein is Small ribosomal subunit protein uS3 of Syntrophus aciditrophicus (strain SB).